A 281-amino-acid chain; its full sequence is Cell growth regulator with EF hand domain protein 1 (281 aa).

Residues methionine 1–alanine 21 form the signal peptide. EF-hand domains are found at residues asparagine 71 to proline 106 and proline 115 to arginine 150. The Ca(2+) site is built by aspartate 84, aspartate 86, asparagine 88, glutamine 90, glutamate 95, aspartate 128, aspartate 130, aspartate 132, and glutamate 139. The interval glutamate 146–isoleucine 281 is disordered. Positions leucine 169–glycine 184 are enriched in polar residues. The span at threonine 185 to valine 213 shows a compositional bias: basic and acidic residues. Phosphoserine is present on residues serine 217 and serine 228. The segment covering glycine 234–proline 256 has biased composition (basic and acidic residues).

In terms of processing, probably digested extracellularly by an unknown serine protease generating extremely hydrophobic bioactive peptides. Expressed predominantly in whole brain and kidney, with limited expression in heart, lung, liver, and skeletal muscle and no expression in spleen and testis. Also expressed in pituitary gland, adrenal gland, digestive tract, and reproductive organs.

Its subcellular location is the secreted. In terms of biological role, mediates cell-cell adhesion in a calcium-dependent manner. Able to inhibit growth in several cell lines. This chain is Cell growth regulator with EF hand domain protein 1, found in Rattus norvegicus (Rat).